The sequence spans 595 residues: Adenine deaminase 3 (595 aa).

It belongs to the metallo-dependent hydrolases superfamily. Adenine deaminase family. Mn(2+) is required as a cofactor.

The catalysed reaction is adenine + H2O + H(+) = hypoxanthine + NH4(+). The polypeptide is Adenine deaminase 3 (Rhizobium meliloti (strain 1021) (Ensifer meliloti)).